The primary structure comprises 124 residues: uncharacterized protein (124 aa).

The helical transmembrane segment at 83–100 (VTCFSLYTICYRIVLIWA) threads the bilayer.

Its subcellular location is the membrane. This is an uncharacterized protein from Saccharomyces cerevisiae (strain ATCC 204508 / S288c) (Baker's yeast).